The primary structure comprises 714 residues: Elongation factor G-like protein (714 aa).

The 269-residue stretch at 21 to 289 (GGVRNVVLVG…VATRGFPSPM (269 aa)) folds into the tr-type G domain. Residues 30-37 (GPSGGGKT) form a G1 region. GTP is bound at residue 30–37 (GPSGGGKT). The tract at residues 73 to 77 (QRSVG) is G2. The segment at 94–97 (DTPG) is G3. GTP-binding positions include 94-98 (DTPGY) and 148-151 (TKLD). The segment at 148 to 151 (TKLD) is G4. The tract at residues 267 to 269 (CSS) is G5.

Belongs to the TRAFAC class translation factor GTPase superfamily. Classic translation factor GTPase family. EF-G/EF-2 subfamily.

The protein is Elongation factor G-like protein of Mycobacterium tuberculosis (strain ATCC 25618 / H37Rv).